Here is a 126-residue protein sequence, read N- to C-terminus: Cystatin-C (126 aa).

Residues 1 to 18 (MKMLVFPVLAALFAVGLG) form the signal peptide. In terms of domain architecture, Cystatin spans 22 to 115 (GAPRDINISE…CTFSVWSRPW (94 aa)). Residues 64 to 68 (QVVSG) carry the Secondary area of contact motif. Intrachain disulfides connect Cys82–Cys92 and Cys106–Cys126.

Belongs to the cystatin family. Ubiquitously expressed in normal tissues including brain, eye, gill, heart, gullet, liver, spleen, stomach, pyloric ceca, intestine, kidney and muscle. Expressed, but not up-regulated, in lipopolysaccharide (LPS)-stimulated tissues including kidney, spleen, muscle and gill.

Its subcellular location is the secreted. In terms of biological role, thiol protease inhibitor. Has high papain inhibitory activity and inhibits to a lesser extent fish cathepsins L, S, K, F, X and bovine cathepsin B in vitro. The chain is Cystatin-C from Paralichthys olivaceus (Bastard halibut).